The chain runs to 231 residues: NADH-ubiquinone oxidoreductase chain 4 (231 aa).

6 helical membrane passes run Pro1–Ile21, Met34–Leu54, Leu62–Trp84, Ala89–Tyr111, Ile128–Pro148, and Thr169–Leu189.

Belongs to the complex I subunit 4 family.

Its subcellular location is the mitochondrion membrane. The catalysed reaction is a ubiquinone + NADH + 5 H(+)(in) = a ubiquinol + NAD(+) + 4 H(+)(out). Functionally, core subunit of the mitochondrial membrane respiratory chain NADH dehydrogenase (Complex I) that is believed to belong to the minimal assembly required for catalysis. Complex I functions in the transfer of electrons from NADH to the respiratory chain. The immediate electron acceptor for the enzyme is believed to be ubiquinone. This is NADH-ubiquinone oxidoreductase chain 4 (MT-ND4) from Bothrops erythromelas (Caatinga lance head).